The primary structure comprises 86 residues: Neurotoxin LmNaTx34.2 (86 aa).

A signal peptide spans 1–18; sequence MKTLILVVIALMVIEVKS. Residues 19 to 85 form the LCN-type CS-alpha/beta domain; it reads DGYLMVRAGR…IWTYEKNTCS (67 aa). 4 cysteine pairs are disulfide-bonded: Cys32/Cys84, Cys36/Cys57, Cys43/Cys64, and Cys47/Cys66.

Belongs to the long (4 C-C) scorpion toxin superfamily. Sodium channel inhibitor family. Beta subfamily. Expressed by the venom gland.

The protein resides in the secreted. Functionally, binds voltage-independently at site-4 of sodium channels (Nav) and shift the voltage of activation toward more negative potentials thereby affecting sodium channel activation and promoting spontaneous and repetitive firing. This chain is Neurotoxin LmNaTx34.2, found in Lychas mucronatus (Chinese swimming scorpion).